We begin with the raw amino-acid sequence, 100 residues long: Aspartyl/glutamyl-tRNA(Asn/Gln) amidotransferase subunit C (100 aa).

Belongs to the GatC family. In terms of assembly, heterotrimer of A, B and C subunits.

It carries out the reaction L-glutamyl-tRNA(Gln) + L-glutamine + ATP + H2O = L-glutaminyl-tRNA(Gln) + L-glutamate + ADP + phosphate + H(+). The enzyme catalyses L-aspartyl-tRNA(Asn) + L-glutamine + ATP + H2O = L-asparaginyl-tRNA(Asn) + L-glutamate + ADP + phosphate + 2 H(+). Functionally, allows the formation of correctly charged Asn-tRNA(Asn) or Gln-tRNA(Gln) through the transamidation of misacylated Asp-tRNA(Asn) or Glu-tRNA(Gln) in organisms which lack either or both of asparaginyl-tRNA or glutaminyl-tRNA synthetases. The reaction takes place in the presence of glutamine and ATP through an activated phospho-Asp-tRNA(Asn) or phospho-Glu-tRNA(Gln). This Rickettsia typhi (strain ATCC VR-144 / Wilmington) protein is Aspartyl/glutamyl-tRNA(Asn/Gln) amidotransferase subunit C.